Here is a 315-residue protein sequence, read N- to C-terminus: Olfactory receptor 52R1 (315 aa).

Over 1–28 (MVLASGNSSSHPVSFILLGIPGLESFQL) the chain is Extracellular. N7 carries N-linked (GlcNAc...) asparagine glycosylation. Residues 29–49 (WIAFPFCATYAVAVVGNITLL) form a helical membrane-spanning segment. Residues 50–57 (HVIRIDHT) lie on the Cytoplasmic side of the membrane. Residues 58-78 (LHEPMYLFLAMLAITDLVLSS) form a helical membrane-spanning segment. Residues 79 to 102 (STQPKMLAIFWFHAHEIQYHACLI) are Extracellular-facing. Residues C100 and C192 are joined by a disulfide bond. The helical transmembrane segment at 103-123 (QVFFIHAFSSVESGVLMAMAL) threads the bilayer. Topologically, residues 124–142 (DCYVAICFPLRHSSILTPS) are cytoplasmic. A helical membrane pass occupies residues 143 to 163 (VVIKLGTIVMLRGLLWVSPFC). Residues 164 to 199 (FMVSRMPFCQHQAIPQSYCEHMAVLKLVCADTSISR) are Extracellular-facing. The helical transmembrane segment at 200-220 (GNGLFVAFSVAGFDMIVIGMS) threads the bilayer. Topologically, residues 221 to 240 (YVMILRAVLQLPSGEARLKA) are cytoplasmic. The chain crosses the membrane as a helical span at residues 241 to 261 (FSTRSSHICVILALYIPALFS). Residues 262-276 (FLTYRFGHDVPRVVH) lie on the Extracellular side of the membrane. A helical transmembrane segment spans residues 277–297 (ILFANLYLLIPPMLNPIIYGV). Residues 298-315 (RTKQIGDRVIQGCCGNIP) are Cytoplasmic-facing.

This sequence belongs to the G-protein coupled receptor 1 family.

The protein resides in the cell membrane. In terms of biological role, odorant receptor. This Homo sapiens (Human) protein is Olfactory receptor 52R1 (OR52R1).